A 1140-amino-acid chain; its full sequence is Receptor-type guanylate cyclase gcy-3 (1140 aa).

Positions 1 to 21 (MKNVFQLLIPLFFHLFSLVSL) are cleaved as a signal peptide. Topologically, residues 22 to 495 (QNIPVSTGTT…CPLPFWEQYG (474 aa)) are extracellular. N-linked (GlcNAc...) asparagine glycans are attached at residues Asn-220, Asn-301, Asn-349, Asn-385, Asn-418, Asn-441, and Asn-459. Residues 496–516 (ILIFVGAGVFLIMITTNLICF) traverse the membrane as a helical segment. Residues 517–1140 (LFMIKNRREE…RQYKMDTLKI (624 aa)) lie on the Cytoplasmic side of the membrane. The Protein kinase domain maps to 538–826 (FVKLRELERK…NICEQLRDLM (289 aa)). Residues 544–552 (LERKSKGTS) and Lys-582 contribute to the ATP site. In terms of domain architecture, Guanylate cyclase spans 897–1027 (TVFFSDVVKF…DTVNTASRME (131 aa)). The interval 1083–1140 (PSISNRSTPPVTQERFTVRAPDTPEARSVSSHGSRPSSNHNNNNDPLYRQYKMDTLKI) is disordered. Positions 1084-1097 (SISNRSTPPVTQER) are enriched in polar residues. Residues 1109-1126 (RSVSSHGSRPSSNHNNNN) are compositionally biased toward low complexity.

This sequence belongs to the adenylyl cyclase class-4/guanylyl cyclase family. In terms of tissue distribution, expressed asymmetrically in ASE right (ASER) sensory neuron and bilaterally in ASI sensory neurons. Expressed in PVT interneuron.

Its subcellular location is the cell membrane. It catalyses the reaction GTP = 3',5'-cyclic GMP + diphosphate. Functionally, guanylate cyclase involved in the production of the second messenger cGMP. The protein is Receptor-type guanylate cyclase gcy-3 of Caenorhabditis elegans.